The primary structure comprises 257 residues: Thiazole synthase (257 aa).

The Schiff-base intermediate with DXP role is filled by Lys97. Residues Gly158, 184-185, and 206-207 contribute to the 1-deoxy-D-xylulose 5-phosphate site; these read AG and NT.

This sequence belongs to the ThiG family. Homotetramer. Forms heterodimers with either ThiH or ThiS.

It localises to the cytoplasm. It catalyses the reaction [ThiS sulfur-carrier protein]-C-terminal-Gly-aminoethanethioate + 2-iminoacetate + 1-deoxy-D-xylulose 5-phosphate = [ThiS sulfur-carrier protein]-C-terminal Gly-Gly + 2-[(2R,5Z)-2-carboxy-4-methylthiazol-5(2H)-ylidene]ethyl phosphate + 2 H2O + H(+). It functions in the pathway cofactor biosynthesis; thiamine diphosphate biosynthesis. Its function is as follows. Catalyzes the rearrangement of 1-deoxy-D-xylulose 5-phosphate (DXP) to produce the thiazole phosphate moiety of thiamine. Sulfur is provided by the thiocarboxylate moiety of the carrier protein ThiS. In vitro, sulfur can be provided by H(2)S. The chain is Thiazole synthase from Phocaeicola vulgatus (strain ATCC 8482 / DSM 1447 / JCM 5826 / CCUG 4940 / NBRC 14291 / NCTC 11154) (Bacteroides vulgatus).